The primary structure comprises 349 residues: Isopentenyl-diphosphate delta-isomerase (349 aa).

Residue 5 to 6 participates in substrate binding; the sequence is RK. FMN-binding positions include serine 62, 63–65, serine 93, and asparagine 122; that span reads AIT. 93–95 is a substrate binding site; that stretch reads SQR. Glutamine 151 lines the substrate pocket. Glutamate 152 lines the Mg(2+) pocket. Residues lysine 183, threonine 213, 259–261, and 280–281 each bind FMN; these read GIR and AL.

The protein belongs to the IPP isomerase type 2 family. In terms of assembly, homooctamer. Dimer of tetramers. The cofactor is FMN. NADPH serves as cofactor. Mg(2+) is required as a cofactor.

It localises to the cytoplasm. It catalyses the reaction isopentenyl diphosphate = dimethylallyl diphosphate. Involved in the biosynthesis of isoprenoids. Catalyzes the 1,3-allylic rearrangement of the homoallylic substrate isopentenyl (IPP) to its allylic isomer, dimethylallyl diphosphate (DMAPP). The polypeptide is Isopentenyl-diphosphate delta-isomerase (Methanothermobacter thermautotrophicus (strain ATCC 29096 / DSM 1053 / JCM 10044 / NBRC 100330 / Delta H) (Methanobacterium thermoautotrophicum)).